The sequence spans 139 residues: Peptide methionine sulfoxide reductase B4 (139 aa).

N-acetylalanine is present on A2. Residues 12–133 (EEEWRAVLSP…NSVSINFNPA (122 aa)) form the MsrB domain. Zn(2+)-binding residues include C51, C54, C97, and C100. A disulfide bond links C69 and C122. The active-site Nucleophile is C122.

The protein belongs to the MsrB Met sulfoxide reductase family. Requires Zn(2+) as cofactor.

Its subcellular location is the cytoplasm. It localises to the cytosol. The enzyme catalyses L-methionyl-[protein] + [thioredoxin]-disulfide + H2O = L-methionyl-(R)-S-oxide-[protein] + [thioredoxin]-dithiol. In terms of biological role, catalyzes the reduction of methionine sulfoxide (MetSO) to methionine in proteins. Plays a protective role against oxidative stress by restoring activity to proteins that have been inactivated by methionine oxidation. MSRB family specifically reduces the MetSO R-enantiomer. The polypeptide is Peptide methionine sulfoxide reductase B4 (MSRB4) (Arabidopsis thaliana (Mouse-ear cress)).